The following is a 786-amino-acid chain: Myosin light chain kinase 3 (786 aa).

At S155 the chain carries Phosphoserine. 3 disordered regions span residues 233 to 258 (EALDPGQEPPPTEAESRLPALASEDT), 279 to 315 (RMSQSAGEGTSSSKPDCSEPGPQPLGPLTTDSDIHSD), and 333 to 443 (ELFE…GRRV). Polar residues predominate over residues 279–293 (RMSQSAGEGTSSSKP). Phosphoserine occurs at positions 341 and 422. One can recognise a Protein kinase domain in the interval 482–737 (VSQHEVLGGG…ATQCLKHEWL (256 aa)). Residues 488-496 (LGGGRFGQV) and K511 each bind ATP. D603 (proton acceptor) is an active-site residue.

It belongs to the protein kinase superfamily. CAMK Ser/Thr protein kinase family. Mg(2+) serves as cofactor. Phosphorylated on serine residues. As to expression, expressed in cardiomyocytes (at protein level). Up-regulated in heart after experimental myocardial infarction at the mRNA level.

It is found in the cytoplasm. The enzyme catalyses L-seryl-[myosin light chain] + ATP = O-phospho-L-seryl-[myosin light chain] + ADP + H(+). The catalysed reaction is L-threonyl-[myosin light chain] + ATP = O-phospho-L-threonyl-[myosin light chain] + ADP + H(+). In terms of biological role, calmodulin-dependent kinase that phosphorylates MYL2 in vitro. Promotes sarcomere formation in cardiomyocytes. Increases cardiomyocyte contractility. The chain is Myosin light chain kinase 3 (Mylk3) from Rattus norvegicus (Rat).